We begin with the raw amino-acid sequence, 92 residues long: MIKNSFISFQEKKKENSGSVEFQVFSFTNKIRRLTSHLELHRKDYLSQRGLRKILGKRQRLLSYLSKKNRVRYKELINQLDIRESKKISFLN.

Belongs to the universal ribosomal protein uS15 family. As to quaternary structure, part of the 30S ribosomal subunit.

Its subcellular location is the plastid. It is found in the chloroplast. In Carica papaya (Papaya), this protein is Small ribosomal subunit protein uS15c (rps15).